We begin with the raw amino-acid sequence, 419 residues long: CDP-diacylglycerol--serine O-phosphatidyltransferase 3 (419 aa).

A disordered region spans residues 1-51; sequence MPVRRRWYPPSSTAAQPSPDGGDVNTDDADACPSSRQQRPPSLPQHSAPIH. A compositionally biased stretch (low complexity) spans 33-47; that stretch reads PSSRQQRPPSLPQHS. A run of 7 helical transmembrane segments spans residues 103-123, 142-162, 168-188, 260-280, 287-307, 359-379, and 384-404; these read PHTV…SGVL, WAMI…TILI, VWRL…FLLF, LLLW…RHML, WWDS…WAGM, FIQV…TFFL, and WIPP…LIAI.

Belongs to the CDP-alcohol phosphatidyltransferase class-I family.

The protein resides in the endoplasmic reticulum membrane. The catalysed reaction is a CDP-1,2-diacyl-sn-glycerol + L-serine = a 1,2-diacyl-sn-glycero-3-phospho-L-serine + CMP + H(+). Its pathway is phospholipid metabolism; phosphatidylethanolamine biosynthesis; phosphatidylethanolamine from CDP-diacylglycerol: step 1/2. Functionally, catalyzes a base-exchange reaction in which the polar head group of phosphatidylethanolamine (PE) or phosphatidylcholine (PC) is replaced by L-serine. This is CDP-diacylglycerol--serine O-phosphatidyltransferase 3 (PSS3) from Oryza sativa subsp. japonica (Rice).